Reading from the N-terminus, the 93-residue chain is Large ribosomal subunit protein bL27 (93 aa).

The propeptide occupies 1-10; that stretch reads MLLKLQIQLF.

Belongs to the bacterial ribosomal protein bL27 family. In terms of processing, the N-terminus is cleaved by ribosomal processing cysteine protease Prp.

The protein is Large ribosomal subunit protein bL27 of Phytoplasma australiense.